Reading from the N-terminus, the 96-residue chain is Small ribosomal subunit protein bS6 (96 aa).

It belongs to the bacterial ribosomal protein bS6 family.

Its function is as follows. Binds together with bS18 to 16S ribosomal RNA. The sequence is that of Small ribosomal subunit protein bS6 from Gloeobacter violaceus (strain ATCC 29082 / PCC 7421).